A 431-amino-acid chain; its full sequence is Enolase (431 aa).

Gln-166 is a (2R)-2-phosphoglycerate binding site. The active-site Proton donor is the Glu-208. Mg(2+)-binding residues include Asp-245, Glu-288, and Asp-315. Residues Lys-340, Arg-369, Ser-370, and Lys-391 each coordinate (2R)-2-phosphoglycerate. Lys-340 acts as the Proton acceptor in catalysis.

Belongs to the enolase family. It depends on Mg(2+) as a cofactor.

The protein resides in the cytoplasm. It localises to the secreted. Its subcellular location is the cell surface. It catalyses the reaction (2R)-2-phosphoglycerate = phosphoenolpyruvate + H2O. Its pathway is carbohydrate degradation; glycolysis; pyruvate from D-glyceraldehyde 3-phosphate: step 4/5. Its function is as follows. Catalyzes the reversible conversion of 2-phosphoglycerate (2-PG) into phosphoenolpyruvate (PEP). It is essential for the degradation of carbohydrates via glycolysis. This chain is Enolase, found in Clostridium botulinum (strain Loch Maree / Type A3).